Reading from the N-terminus, the 192-residue chain is MTEQTIDNILPASKNNVKQWYVVHTASGAEKRIKEDILRKIAKQKMTDFFEDILIPVFGVSEVKRGKNVKVEKKLMPSYILIKMNMTDKSWHLVKNIPGVTGFLGSKIVPKALTESEIQNIFNNLEAEAKVAKNSKLYEVGEIVTVTDGPFETFMGTVEAIDKARNRLKVSVSIFGKATPIELNFNQVKKSD.

The protein belongs to the NusG family.

Its function is as follows. Participates in transcription elongation, termination and antitermination. In Rickettsia prowazekii (strain Madrid E), this protein is Transcription termination/antitermination protein NusG.